The following is a 604-amino-acid chain: Glutamine--fructose-6-phosphate aminotransferase [isomerizing] (604 aa).

Residue C2 is the Nucleophile; for GATase activity of the active site. In terms of domain architecture, Glutamine amidotransferase type-2 spans 2–219 (CGIMGAVSER…EGDSACVTTQ (218 aa)). 2 consecutive SIS domains span residues 279 to 427 (LRAS…DNRA) and 454 to 594 (LASL…VDQP). The active-site For Fru-6P isomerization activity is K599.

In terms of assembly, homodimer.

Its subcellular location is the cytoplasm. It carries out the reaction D-fructose 6-phosphate + L-glutamine = D-glucosamine 6-phosphate + L-glutamate. Functionally, catalyzes the first step in hexosamine metabolism, converting fructose-6P into glucosamine-6P using glutamine as a nitrogen source. This chain is Glutamine--fructose-6-phosphate aminotransferase [isomerizing], found in Legionella pneumophila (strain Lens).